The chain runs to 252 residues: Carbonic anhydrase (252 aa).

The first 26 residues, 1-26 (MPRFPRTLPRLTAVLLLACTAFSAAA), serve as a signal peptide directing secretion. The Alpha-carbonic anhydrase domain occupies 31–252 (THWGYTGHDS…QPLNARVVIE (222 aa)). Cysteines 54 and 207 form a disulfide. H92 acts as the Proton acceptor in catalysis. H118, H120, and H137 together coordinate Zn(2+). 203 to 204 (TT) is a substrate binding site.

Belongs to the alpha-carbonic anhydrase family. In terms of assembly, homodimer. Zn(2+) is required as a cofactor.

The protein resides in the periplasm. The enzyme catalyses hydrogencarbonate + H(+) = CO2 + H2O. In terms of biological role, reversible hydration of carbon dioxide. This chain is Carbonic anhydrase (cah), found in Neisseria gonorrhoeae.